The following is a 40-amino-acid chain: Photosystem II reaction center protein J (40 aa).

Residues 8 to 28 traverse the membrane as a helical segment; it reads IPLWLIGTVAGILIIGLLGVF.

The protein belongs to the PsbJ family. In terms of assembly, PSII is composed of 1 copy each of membrane proteins PsbA, PsbB, PsbC, PsbD, PsbE, PsbF, PsbH, PsbI, PsbJ, PsbK, PsbL, PsbM, PsbT, PsbX, PsbY, PsbZ, Psb30/Ycf12, at least 3 peripheral proteins of the oxygen-evolving complex and a large number of cofactors. It forms dimeric complexes.

It localises to the plastid. The protein resides in the chloroplast thylakoid membrane. Its function is as follows. One of the components of the core complex of photosystem II (PSII). PSII is a light-driven water:plastoquinone oxidoreductase that uses light energy to abstract electrons from H(2)O, generating O(2) and a proton gradient subsequently used for ATP formation. It consists of a core antenna complex that captures photons, and an electron transfer chain that converts photonic excitation into a charge separation. In Nandina domestica (Heavenly bamboo), this protein is Photosystem II reaction center protein J.